The chain runs to 79 residues: Small ribosomal subunit protein bS18B (79 aa).

The protein belongs to the bacterial ribosomal protein bS18 family. Part of the 30S ribosomal subunit. Forms a tight heterodimer with protein bS6.

Functionally, binds as a heterodimer with protein bS6 to the central domain of the 16S rRNA, where it helps stabilize the platform of the 30S subunit. The protein is Small ribosomal subunit protein bS18B of Saccharopolyspora erythraea (strain ATCC 11635 / DSM 40517 / JCM 4748 / NBRC 13426 / NCIMB 8594 / NRRL 2338).